We begin with the raw amino-acid sequence, 150 residues long: UPF0178 protein Sbal223_2514 (150 aa).

It belongs to the UPF0178 family.

In Shewanella baltica (strain OS223), this protein is UPF0178 protein Sbal223_2514.